Here is a 1168-residue protein sequence, read N- to C-terminus: Pre-mRNA-splicing factor ATP-dependent RNA helicase prp22 (1168 aa).

Disordered stretches follow at residues 77–100 (KDDI…HDLD) and 144–197 (TLAK…RSSR). The segment covering 84-94 (NVNNGSNSVNG) has biased composition (low complexity). Positions 149-173 (RRNDRDSRRDERHYLNGIRERRERS) are enriched in basic and acidic residues. Residues 184–197 (TSISGQSHSSRSSR) are compositionally biased toward low complexity. Positions 207–280 (YGIYSGVVSG…SAKRISLSMK (74 aa)) constitute an S1 motif domain. Residues 287 to 314 (GEDLNPDQVSRSTKKGSGANAIPLSAQN) form a disordered region. The Helicase ATP-binding domain maps to 520-684 (LEAVSKNQIL…FYKCPIFTIP (165 aa)). An ATP-binding site is contributed by 533–540 (GETGSGKT). The short motif at 631 to 634 (DEAH) is the DEAH box element. In terms of domain architecture, Helicase C-terminal spans 702-882 (YLDAALMTVM…HTILMLKAMG (181 aa)).

The protein belongs to the DEAD box helicase family. DEAH subfamily. DDX8/PRP22 sub-subfamily. Belongs to the 40S cdc5-associated complex (or cwf complex), a spliceosome sub-complex reminiscent of a late-stage spliceosome composed of the U2, U5 and U6 snRNAs and at least brr2, cdc5, cwf2/prp3, cwf3/syf1, cwf4/syf3, cwf5/ecm2, spp42/cwf6, cwf7/spf27, cwf8, cwf9, cwf10, cwf11, cwf12, prp45/cwf13, cwf14, cwf15, cwf16, cwf17, cwf18, cwf19, cwf20, cwf21, cwf22, cwf23, cwf24, cwf25, cwf26, cyp7/cwf27, cwf28, cwf29/ist3, lea1, msl1, prp5/cwf1, prp10, prp12/sap130, prp17, prp22, sap61, sap62, sap114, sap145, slu7, smb1, smd1, smd3, smf1, smg1 and syf2.

The protein resides in the nucleus. It catalyses the reaction ATP + H2O = ADP + phosphate + H(+). Functionally, acts late in the splicing of pre-mRNA. Required for the splicing of introns with a branch nucleotide to 3'-splice site distance greater or equal to 15. Mediates the release of the spliced mRNA from spliceosomes. This is Pre-mRNA-splicing factor ATP-dependent RNA helicase prp22 (prp22) from Schizosaccharomyces pombe (strain 972 / ATCC 24843) (Fission yeast).